We begin with the raw amino-acid sequence, 37 residues long: Cytochrome b6-f complex subunit 5 (37 aa).

A helical membrane pass occupies residues 5-25 (FLFGIVLGLIPITLTGLFVTA).

This sequence belongs to the PetG family. In terms of assembly, the 4 large subunits of the cytochrome b6-f complex are cytochrome b6, subunit IV (17 kDa polypeptide, PetD), cytochrome f and the Rieske protein, while the 4 small subunits are PetG, PetL, PetM and PetN. The complex functions as a dimer.

It is found in the plastid. The protein localises to the chloroplast thylakoid membrane. Component of the cytochrome b6-f complex, which mediates electron transfer between photosystem II (PSII) and photosystem I (PSI), cyclic electron flow around PSI, and state transitions. PetG is required for either the stability or assembly of the cytochrome b6-f complex. The sequence is that of Cytochrome b6-f complex subunit 5 from Phalaenopsis aphrodite subsp. formosana (Moth orchid).